The chain runs to 95 residues: DNA/RNA-binding protein Alba (95 aa).

The residue at position 13 (Lys-13) is an N6-acetyllysine.

Belongs to the histone-like Alba family. Post-translationally, acetylated. Acetylation at Lys-13 decreases DNA-binding affinity.

The protein localises to the cytoplasm. Its subcellular location is the chromosome. Binds double-stranded DNA tightly but without sequence specificity. Involved in DNA compaction. This chain is DNA/RNA-binding protein Alba, found in Nitrosopumilus maritimus (strain SCM1).